A 180-amino-acid polypeptide reads, in one-letter code: Pro-glucagon (180 aa).

An N-terminal signal peptide occupies residues M1 to Q20. Positions L23–G56 are disordered. S54 carries the phosphoserine modification. Residues N84–A89 constitute a propeptide that is removed on maturation. 2 positions are modified to phosphoserine: S105 and S108. Arginine amide is present on R127. The propeptide occupies D131–R145. S150 and S152 each carry phosphoserine.

This sequence belongs to the glucagon family. In terms of processing, proglucagon is post-translationally processed in a tissue-specific manner in pancreatic A cells and intestinal L cells. In pancreatic A cells, the major bioactive hormone is glucagon cleaved by PCSK2/PC2. In the intestinal L cells PCSK1/PC1 liberates GLP-1, GLP-2, glicentin and oxyntomodulin. GLP-1 is further N-terminally truncated by post-translational processing in the intestinal L cells resulting in GLP-1(7-37) GLP-1-(7-36)amide. The C-terminal amidation is neither important for the metabolism of GLP-1 nor for its effects on the endocrine pancreas. Glucagon is secreted in the A cells of the islets of Langerhans. GLP-1, GLP-2, oxyntomodulin and glicentin are secreted from enteroendocrine cells throughout the gastrointestinal tract. GLP-1 and GLP-2 are also secreted in selected neurons in the brain.

It localises to the secreted. In terms of biological role, plays a key role in glucose metabolism and homeostasis. Regulates blood glucose by increasing gluconeogenesis and decreasing glycolysis. A counterregulatory hormone of insulin, raises plasma glucose levels in response to insulin-induced hypoglycemia. Plays an important role in initiating and maintaining hyperglycemic conditions in diabetes. Potent stimulator of glucose-dependent insulin release. Also stimulates insulin release in response to IL6. Plays important roles on gastric motility and the suppression of plasma glucagon levels. May be involved in the suppression of satiety and stimulation of glucose disposal in peripheral tissues, independent of the actions of insulin. Has growth-promoting activities on intestinal epithelium. May also regulate the hypothalamic pituitary axis (HPA) via effects on LH, TSH, CRH, oxytocin, and vasopressin secretion. Increases islet mass through stimulation of islet neogenesis and pancreatic beta cell proliferation. Inhibits beta cell apoptosis. Its function is as follows. Stimulates intestinal growth and up-regulates villus height in the small intestine, concomitant with increased crypt cell proliferation and decreased enterocyte apoptosis. The gastrointestinal tract, from the stomach to the colon is the principal target for GLP-2 action. Plays a key role in nutrient homeostasis, enhancing nutrient assimilation through enhanced gastrointestinal function, as well as increasing nutrient disposal. Stimulates intestinal glucose transport and decreases mucosal permeability. Functionally, significantly reduces food intake. Inhibits gastric emptying in humans. Suppression of gastric emptying may lead to increased gastric distension, which may contribute to satiety by causing a sensation of fullness. In terms of biological role, may modulate gastric acid secretion and the gastro-pyloro-duodenal activity. May play an important role in intestinal mucosal growth in the early period of life. In Octodon degus (Degu), this protein is Pro-glucagon (GCG).